A 379-amino-acid polypeptide reads, in one-letter code: Cobalt-precorrin-5B C(1)-methyltransferase (379 aa).

The protein belongs to the CbiD family.

It carries out the reaction Co-precorrin-5B + S-adenosyl-L-methionine = Co-precorrin-6A + S-adenosyl-L-homocysteine. It functions in the pathway cofactor biosynthesis; adenosylcobalamin biosynthesis; cob(II)yrinate a,c-diamide from sirohydrochlorin (anaerobic route): step 6/10. Its function is as follows. Catalyzes the methylation of C-1 in cobalt-precorrin-5B to form cobalt-precorrin-6A. The protein is Cobalt-precorrin-5B C(1)-methyltransferase of Salmonella typhimurium (strain LT2 / SGSC1412 / ATCC 700720).